We begin with the raw amino-acid sequence, 258 residues long: Hydroxyacylglutathione hydrolase (258 aa).

Residues H56, H58, D60, H61, H112, D132, and H170 each coordinate Zn(2+).

The protein belongs to the metallo-beta-lactamase superfamily. Glyoxalase II family. Monomer. The cofactor is Zn(2+).

It carries out the reaction an S-(2-hydroxyacyl)glutathione + H2O = a 2-hydroxy carboxylate + glutathione + H(+). It participates in secondary metabolite metabolism; methylglyoxal degradation; (R)-lactate from methylglyoxal: step 2/2. Thiolesterase that catalyzes the hydrolysis of S-D-lactoyl-glutathione to form glutathione and D-lactic acid. The sequence is that of Hydroxyacylglutathione hydrolase from Pseudomonas aeruginosa (strain ATCC 15692 / DSM 22644 / CIP 104116 / JCM 14847 / LMG 12228 / 1C / PRS 101 / PAO1).